The chain runs to 99 residues: MNPVNYLYLAALLFAIGASGVLVRRNAIVVFMCVELMLNACNLALVTFSRMHGNLDGQIVAFFTMVVAAAEVVVGLAIIVSLFRSRHSASVDDASLMKL.

3 consecutive transmembrane segments (helical) span residues 3–23 (PVNYLYLAALLFAIGASGVLV), 28–48 (IVVFMCVELMLNACNLALVTF), and 59–79 (IVAFFTMVVAAAEVVVGLAII).

This sequence belongs to the complex I subunit 4L family. As to quaternary structure, NDH-1 is composed of 14 different subunits. Subunits NuoA, H, J, K, L, M, N constitute the membrane sector of the complex.

The protein localises to the cell membrane. The enzyme catalyses a quinone + NADH + 5 H(+)(in) = a quinol + NAD(+) + 4 H(+)(out). In terms of biological role, NDH-1 shuttles electrons from NADH, via FMN and iron-sulfur (Fe-S) centers, to quinones in the respiratory chain. The immediate electron acceptor for the enzyme in this species is believed to be a menaquinone. Couples the redox reaction to proton translocation (for every two electrons transferred, four hydrogen ions are translocated across the cytoplasmic membrane), and thus conserves the redox energy in a proton gradient. The polypeptide is NADH-quinone oxidoreductase subunit K 1 (Streptomyces griseus subsp. griseus (strain JCM 4626 / CBS 651.72 / NBRC 13350 / KCC S-0626 / ISP 5235)).